We begin with the raw amino-acid sequence, 402 residues long: Alanine racemase (402 aa).

Catalysis depends on Lys-34, which acts as the Proton acceptor; specific for D-alanine. Lys-34 is subject to N6-(pyridoxal phosphate)lysine. Arg-133 contacts substrate. An RPE1 insert domain is found at 226–271; that stretch reads EVSYNLSYKEKFERNTPALATTVCINKCADVNTRLTYKVPLKGSYR. The active-site Proton acceptor; specific for L-alanine is Tyr-296. Met-344 is a binding site for substrate.

This sequence belongs to the alanine racemase family. Pyridoxal 5'-phosphate is required as a cofactor.

The enzyme catalyses L-alanine = D-alanine. Its pathway is amino-acid biosynthesis; D-alanine biosynthesis; D-alanine from L-alanine: step 1/1. Catalyzes the interconversion of L-alanine and D-alanine. May also act on other amino acids. The protein is Alanine racemase (alr) of Rickettsia typhi (strain ATCC VR-144 / Wilmington).